Consider the following 180-residue polypeptide: Crossover junction endodeoxyribonuclease RuvC (180 aa).

Catalysis depends on residues Asp9, Glu74, and Asp146. 3 residues coordinate Mg(2+): Asp9, Glu74, and Asp146.

This sequence belongs to the RuvC family. In terms of assembly, homodimer which binds Holliday junction (HJ) DNA. The HJ becomes 2-fold symmetrical on binding to RuvC with unstacked arms; it has a different conformation from HJ DNA in complex with RuvA. In the full resolvosome a probable DNA-RuvA(4)-RuvB(12)-RuvC(2) complex forms which resolves the HJ. The cofactor is Mg(2+).

It localises to the cytoplasm. It carries out the reaction Endonucleolytic cleavage at a junction such as a reciprocal single-stranded crossover between two homologous DNA duplexes (Holliday junction).. The RuvA-RuvB-RuvC complex processes Holliday junction (HJ) DNA during genetic recombination and DNA repair. Endonuclease that resolves HJ intermediates. Cleaves cruciform DNA by making single-stranded nicks across the HJ at symmetrical positions within the homologous arms, yielding a 5'-phosphate and a 3'-hydroxyl group; requires a central core of homology in the junction. The consensus cleavage sequence is 5'-(A/T)TT(C/G)-3'. Cleavage occurs on the 3'-side of the TT dinucleotide at the point of strand exchange. HJ branch migration catalyzed by RuvA-RuvB allows RuvC to scan DNA until it finds its consensus sequence, where it cleaves and resolves the cruciform DNA. The chain is Crossover junction endodeoxyribonuclease RuvC from Methylobacillus flagellatus (strain ATCC 51484 / DSM 6875 / VKM B-1610 / KT).